Consider the following 135-residue polypeptide: Centromere protein S (135 aa).

The disordered stretch occupies residues 103-135 (SLEQKEKKKKKSVSGGNVSRNSDMDTVVPESKD).

Belongs to the TAF9 family. CENP-S/MHF1 subfamily. Heterodimer with CENPX, sometimes called MHF; this interaction stabilizes both partners. MHF heterodimers can assemble to form tetrameric structures. MHF also coassemble with CENPT-CENPW heterodimers at centromeres to form the tetrameric CENP-T-W-S-X complex. Forms a discrete complex with FANCM and CENPX, called FANCM-MHF; this interaction, probably mediated by direct binding between CENPS and FANCM, leads to synergistic activation of double-stranded DNA binding and strongly stimulates FANCM-mediated DNA remodeling. Recruited by FANCM to the Fanconi anemia (FA) core complex, which consists of CENPS, CENPX, FANCA, FANCB, FANCC, FANCE, FANCF, FANCG, FANCL, FANCM, FAAP24 and FAAP100. The FA core complex associates with Bloom syndrome (BLM) complex, which consists of at least BLM, DNA topoisomerase 3-alpha (TOP3A), RMI1/BLAP75, RPA1/RPA70 and RPA2/RPA32. The super complex between FA and BLM is called BRAFT. Component of the CENPA-CAD complex, composed of CENPI, CENPK, CENPL, CENPO, CENPP, CENPQ, CENPR and CENPS. The CENPA-CAD complex is probably recruited on centromeres by the CENPA-NAC complex, at least composed of CENPA, CENPC, CENPH, CENPM, CENPN, CENPT and CENPU.

It is found in the nucleus. The protein resides in the chromosome. It localises to the centromere. Its subcellular location is the kinetochore. In terms of biological role, DNA-binding component of the Fanconi anemia (FA) core complex. Required for the normal activation of the FA pathway, leading to monoubiquitination of the FANCI-FANCD2 complex in response to DNA damage, cellular resistance to DNA cross-linking drugs, and prevention of chromosomal breakage. In complex with CENPX (MHF heterodimer), crucial cofactor for FANCM in both binding and ATP-dependent remodeling of DNA. Stabilizes FANCM. In complex with CENPX and FANCM (but not other FANC proteins), rapidly recruited to blocked forks and promotes gene conversion at blocked replication forks. In complex with CENPT, CENPW and CENPX (CENP-T-W-S-X heterotetramer), involved in the formation of a functional kinetochore outer plate, which is essential for kinetochore-microtubule attachment and faithful mitotic progression. As a component of MHF and CENP-T-W-S-X complexes, binds DNA and bends it to form a nucleosome-like structure. DNA-binding function is fulfilled in the presence of CENPX, with the following preference for DNA substates: Holliday junction &gt; double-stranded &gt; splay arm &gt; single-stranded. Does not bind DNA on its own. The polypeptide is Centromere protein S (cenps) (Xenopus laevis (African clawed frog)).